Here is a 467-residue protein sequence, read N- to C-terminus: MELEKVHVVLFPYLSKGHMIPMLQLARLLLSHSFAGDISVTVFTTPLNRPFIVDSLSGTKATIVDVPFPDNVPEIPPGVECTDKLPALSSSLFVPFTRATKSMQADFERELMSLPRVSFMVSDGFLWWTQESARKLGFPRLVFFGMNCASTVICDSVFQNQLLSNVKSETEPVSVPEFPWIKVRKCDFVKDMFDPKTTTDPGFKLILDQVTSMNQSQGIIFNTFDDLEPVFIDFYKRKRKLKLWAVGPLCYVNNFLDDEVEEKVKPSWMKWLDEKRDKGCNVLYVAFGSQAEISREQLEEIALGLEESKVNFLWVVKGNEIGKGFEERVGERGMMVRDEWVDQRKILEHESVRGFLSHCGWNSLTESICSEVPILAFPLAAEQPLNAILVVEELRVAERVVAASEGVVRREEIAEKVKELMEGEKGKELRRNVEAYGKMAKKALEEGIGSSRKNLDNLINEFCNNGT.

Residues serine 289, 341-343 (VDQ), 358-366 (HCGWNSLTE), and 380-383 (AAEQ) each bind UDP-alpha-D-glucose.

Belongs to the UDP-glycosyltransferase family.

This is UDP-glycosyltransferase 90A2 (UGT90A2) from Arabidopsis thaliana (Mouse-ear cress).